The following is a 795-amino-acid chain: Phenylalanine--tRNA ligase beta subunit (795 aa).

Positions 39–148 constitute a tRNA-binding domain; the sequence is KSEFHGVVVG…KETLVGINVY (110 aa). Residues 400–475 enclose the B5 domain; the sequence is HKNNTIRLHH…RIYEYNNVHL (76 aa). Residues aspartate 453, aspartate 459, and aspartate 463 each contribute to the Mg(2+) site. In terms of domain architecture, FDX-ACB spans 701 to 794; sequence SKFPTVRRDI…LQKKFQAVLR (94 aa).

It belongs to the phenylalanyl-tRNA synthetase beta subunit family. Type 1 subfamily. Tetramer of two alpha and two beta subunits. The cofactor is Mg(2+).

The protein resides in the cytoplasm. It carries out the reaction tRNA(Phe) + L-phenylalanine + ATP = L-phenylalanyl-tRNA(Phe) + AMP + diphosphate + H(+). This chain is Phenylalanine--tRNA ligase beta subunit (pheT), found in Buchnera aphidicola subsp. Acyrthosiphon pisum (strain APS) (Acyrthosiphon pisum symbiotic bacterium).